Consider the following 501-residue polypeptide: Lysine--tRNA ligase (501 aa).

E411 and E418 together coordinate Mg(2+).

Belongs to the class-II aminoacyl-tRNA synthetase family. In terms of assembly, homodimer. The cofactor is Mg(2+).

Its subcellular location is the cytoplasm. It catalyses the reaction tRNA(Lys) + L-lysine + ATP = L-lysyl-tRNA(Lys) + AMP + diphosphate. In Clostridium perfringens (strain SM101 / Type A), this protein is Lysine--tRNA ligase.